A 73-amino-acid polypeptide reads, in one-letter code: Small ribosomal subunit protein bS18c (73 aa).

It belongs to the bacterial ribosomal protein bS18 family. Part of the 30S ribosomal subunit.

It is found in the plastid. The protein resides in the chloroplast. The polypeptide is Small ribosomal subunit protein bS18c (Rhodomonas salina (Cryptomonas salina)).